The chain runs to 302 residues: UPF0761 membrane protein Tola_0461 (302 aa).

6 helical membrane-spanning segments follow: residues tyrosine 51 to leucine 71, threonine 111 to aspartate 131, isoleucine 150 to leucine 170, leucine 188 to leucine 208, alanine 222 to tyrosine 242, and alanine 256 to leucine 276.

This sequence belongs to the UPF0761 family.

The protein resides in the cell inner membrane. The chain is UPF0761 membrane protein Tola_0461 from Tolumonas auensis (strain DSM 9187 / NBRC 110442 / TA 4).